The primary structure comprises 92 residues: Progonadoliberin-1 (92 aa).

A signal peptide spans 1-23 (MELVPKFLAGLILLTLCVGGCYA). Residue Gln24 is modified to Pyrrolidone carboxylic acid. Gly33 is modified (glycine amide).

It belongs to the GnRH family.

The protein resides in the secreted. Its function is as follows. Stimulates the secretion of gonadotropins; it stimulates the secretion of both luteinizing and follicle-stimulating hormones. This is Progonadoliberin-1 (GNRH1) from Tupaia belangeri (Common tree shrew).